The chain runs to 152 residues: Ribonuclease H (152 aa).

Residues 6 to 147 (KKNNVIAYTD…ADELANKAIA (142 aa)) form the RNase H type-1 domain. Residues Asp-15, Glu-53, Asp-75, and Asp-139 each coordinate Mg(2+).

Belongs to the RNase H family. In terms of assembly, monomer. Mg(2+) serves as cofactor.

The protein localises to the cytoplasm. The enzyme catalyses Endonucleolytic cleavage to 5'-phosphomonoester.. Endonuclease that specifically degrades the RNA of RNA-DNA hybrids. The protein is Ribonuclease H of Francisella philomiragia subsp. philomiragia (strain ATCC 25017 / CCUG 19701 / FSC 153 / O#319-036).